The chain runs to 312 residues: D-alanine--D-alanine ligase (312 aa).

The 206-residue stretch at 99 to 304 (KKILKAEGIP…FEDLVEKILM (206 aa)) folds into the ATP-grasp domain. Residue 131 to 186 (LQTLKLPVVIKAPREGSTIGIEFVFSKQELPKAIKKVLEIDKQLLVEEFIEGVEVT) participates in ATP binding. Residues Asp257, Glu271, and Asn273 each coordinate Mg(2+).

Belongs to the D-alanine--D-alanine ligase family. It depends on Mg(2+) as a cofactor. Mn(2+) serves as cofactor.

It localises to the cytoplasm. It carries out the reaction 2 D-alanine + ATP = D-alanyl-D-alanine + ADP + phosphate + H(+). It participates in cell wall biogenesis; peptidoglycan biosynthesis. Cell wall formation. In Carboxydothermus hydrogenoformans (strain ATCC BAA-161 / DSM 6008 / Z-2901), this protein is D-alanine--D-alanine ligase.